A 66-amino-acid polypeptide reads, in one-letter code: uncharacterized protein (66 aa).

Residues 1-25 (MIVIILLFISIIVFLSVIQPQPSKN) form the signal peptide. Residues 21–31 (QPSKNKSRQQA) are compositionally biased toward polar residues. Residues 21 to 66 (QPSKNKSRQQADSGYFGYSDHSSHHDGCSSDGGFSDSGCGGGGGGD) form a disordered region.

This is an uncharacterized protein from Bacillus subtilis (strain 168).